The sequence spans 333 residues: MISLESQVLERHLSIFADKTLLFAGGVNDDFPVQIQKIAKTVTVWSWYFDYANAQGRKSAVDFSPVCDTQVDVIVYYWTKNKAEVQFQLMQLLANGRDNQEILIVGENRCGVRSAEKMLSAFGDIGKIDSARRCGLYHFRLKKRPHFDINAYWKTYRNPKLDALTVYSLPGVFSADELDGGTELLLSTINTHIRGDVLDLGCGAGVLGAYVKQQNPQARVMLTDIHAMALASAERTLAENRLAGKVLASDVFSHIQGKFDLIISNPPFHDGIGTAYRAVSELIKEARWRLKEDGELRIVANAFLPYPDLLDEHFGSHQVLAKTNKFKVYSVCA.

It belongs to the methyltransferase superfamily. RsmC family. As to quaternary structure, monomer.

Its subcellular location is the cytoplasm. It carries out the reaction guanosine(1207) in 16S rRNA + S-adenosyl-L-methionine = N(2)-methylguanosine(1207) in 16S rRNA + S-adenosyl-L-homocysteine + H(+). Specifically methylates the guanine in position 1207 of 16S rRNA in the 30S particle. This chain is Ribosomal RNA small subunit methyltransferase C, found in Actinobacillus succinogenes (strain ATCC 55618 / DSM 22257 / CCUG 43843 / 130Z).